A 270-amino-acid chain; its full sequence is Structure-specific endonuclease subunit SLX1 (270 aa).

A GIY-YIG domain is found at 9 to 94; sequence RFFGVYLLYC…PQASRRLTHV (86 aa). The segment at 182–234 adopts an SLX1-type zinc-finger fold; that stretch reads CSLCARLLQDEEGPLCCPHPGCPLRAHIICLAEEFLQEEPGQLLPLEGHCPSC.

It belongs to the SLX1 family. Forms a heterodimer with SLX4. It depends on a divalent metal cation as a cofactor. Expressed in testis, colon, bone marrow, brain, thymus and to a lesser extent in heart, kidney, skeletal muscle and spleen.

It is found in the nucleus. In terms of biological role, catalytic subunit of the SLX1-SLX4 structure-specific endonuclease that resolves DNA secondary structures generated during DNA repair and recombination. Has endonuclease activity towards branched DNA substrates, introducing single-strand cuts in duplex DNA close to junctions with ss-DNA. Has a preference for 5'-flap structures, and promotes symmetrical cleavage of static and migrating Holliday junctions (HJs). Resolves HJs by generating two pairs of ligatable, nicked duplex products. The protein is Structure-specific endonuclease subunit SLX1 (Slx1b) of Mus musculus (Mouse).